The sequence spans 699 residues: Cell pattern formation-associated protein StuA (699 aa).

Disordered stretches follow at residues 1-20 (MDGT…LLAP) and 31-97 (TPQF…QPEH). The segment covering 32–49 (PQFKSQQSQPQSQSQYPS) has biased composition (low complexity). The span at 52 to 61 (NPDSYSSSSP) shows a compositional bias: polar residues. Residues 75-84 (EDGEDYDQEE) are compositionally biased toward acidic residues. Positions 226–332 (RVTATLWEDE…HNIGALLYHP (107 aa)) constitute an HTH APSES-type domain. The segment at residues 260-281 (GTKLLNVAGMTRGRRDGILKSE) is a DNA-binding region (H-T-H motif). Disordered stretches follow at residues 372–594 (AMPT…MNSM), 599–618 (RRDD…DLNN), and 674–699 (PSYP…QSFG). Over residues 376 to 423 (GYTSQQPLTNGHQSMANTPQPLTNGSQPPMNGSQTPMNGPQPPMQNGG) the composition is skewed to polar residues. Composition is skewed to basic and acidic residues over residues 428-438 (RVREDDDDLHR) and 478-491 (GLKR…DMHR). A compositionally biased stretch (polar residues) spans 520–529 (NLHQPLSNGD). Positions 535-545 (RGRDDDDDVHR) are enriched in basic and acidic residues. Positions 566-594 (TSTSNDMLPQSPYYTLSNGAYQGPMMNSM) are enriched in polar residues. A nuclear localization domain region spans residues 669–695 (TVAVSPSYPAGPGYELARPVTNVPRRQ).

Belongs to the EFG1/PHD1/stuA family.

It is found in the nucleus. In terms of biological role, transcription factor that regulates asexual reproduction. Binds the StuA-response elements (StRE) with the consensus sequence 5'-(A/T)CGCG(T/A)N(A/C)-3' at the promoters of target genes. Controls the expression of the gene clusters involved in the production of deoxynivalenol (DON) and 15-acetyldeoxynivalenol (15ADON). Regulates the expression of genes involved in chitin and glucan metabolism. Also controls catalase activity and cell surface hydrophobicity. Plays an important role in pathogenicity. This is Cell pattern formation-associated protein StuA from Gibberella zeae (strain ATCC MYA-4620 / CBS 123657 / FGSC 9075 / NRRL 31084 / PH-1) (Wheat head blight fungus).